The chain runs to 557 residues: TNF receptor-associated factor 5 (557 aa).

An RING-type zinc finger spans residues 45 to 85 (CAFCHSVLHNPHQTGCGHRFCQHCILSLRELNTVPICPVDK). 2 consecutive TRAF-type zinc fingers follow at residues 127–181 (DHLQ…INLQ) and 182–239 (NHEE…RNLQ). A coiled-coil region spans residues 237-342 (NLQQHEHSAL…VNQQQNKFDL (106 aa)). K318 is covalently cross-linked (Glycyl lysine isopeptide (Lys-Gly) (interchain with G-Cter in ubiquitin)). The tract at residues 345-557 (LMEAVDTVKQ…AVDLTDLEDL (213 aa)) is interaction with EIF2AK2/PKR. An MATH domain is found at 403 to 549 (NGKLIWKVTD…DDTLFLKVAV (147 aa)).

This sequence belongs to the TNF receptor-associated factor family. A subfamily. In terms of assembly, homotrimer. Heteromer with TRAF3. Associates with TNFRSF5/CD40 through interaction with TRAF3. Associates with LTBR/TNFRSF3, TNFRSF4, TNFRSF8/CD30, TNFRSF11A/RANK, TNFRSF13B/TACI, TNFRSF14, TNFRSF17, TNFRSF19/TROY, RIPK2, MAP3K14, MAP3K5, and TRAF and TNF receptor associated protein TDP2. Interacts (via C-terminus) with EIF2AK2/PKR (via the kinase catalytic domain). Post-translationally, ubiquitinated at Lys-318 by the SCF(FBXL2) complex, leading to its degradation by the proteasome. As to expression, expressed in spleen, thymus, prostate, testis, ovary, small intestine, colon, and peripheral blood.

Its subcellular location is the cytoplasm. It is found in the cytosol. Its function is as follows. Adapter protein and signal transducer that links members of the tumor necrosis factor receptor family to different signaling pathways by association with the receptor cytoplasmic domain and kinases. Mediates activation of NF-kappa-B and probably JNK. Seems to be involved in apoptosis. Plays a role in mediating activation of NF-kappa-B by EIF2AK2/PKR. The polypeptide is TNF receptor-associated factor 5 (TRAF5) (Homo sapiens (Human)).